Here is a 227-residue protein sequence, read N- to C-terminus: MAYPFQLGLQDATSPIMEELLHFHDHTLMIVFLISSLVLYIITLMLTTKLTHTSTMDAQEVETVWTILPAIILVLIALPSLRILYMMDEINNPSLTVKTMGHQWYWSYEYTDYEDLNFDSYMIPTQELKPGELRLLEVDNRVVLPMEMTIRMLISSEDVLHSWAVPSLGLKTDAIPGRLNQTTLMAMRPGLYYGQCSEICGSNHSFMPIVLEMVPLSYFETWSALMV.

Residues 1–14 (MAYPFQLGLQDATS) are Mitochondrial intermembrane-facing. Residues 15–45 (PIMEELLHFHDHTLMIVFLISSLVLYIITLM) form a helical membrane-spanning segment. Residues 46–59 (LTTKLTHTSTMDAQ) lie on the Mitochondrial matrix side of the membrane. Residues 60–87 (EVETVWTILPAIILVLIALPSLRILYMM) form a helical membrane-spanning segment. At 88–227 (DEINNPSLTV…YFETWSALMV (140 aa)) the chain is on the mitochondrial intermembrane side. Cu cation-binding residues include His161, Cys196, Glu198, Cys200, His204, and Met207. Position 198 (Glu198) interacts with Mg(2+). Tyr218 carries the post-translational modification Phosphotyrosine.

Belongs to the cytochrome c oxidase subunit 2 family. In terms of assembly, component of the cytochrome c oxidase (complex IV, CIV), a multisubunit enzyme composed of 14 subunits. The complex is composed of a catalytic core of 3 subunits MT-CO1, MT-CO2 and MT-CO3, encoded in the mitochondrial DNA, and 11 supernumerary subunits COX4I, COX5A, COX5B, COX6A, COX6B, COX6C, COX7A, COX7B, COX7C, COX8 and NDUFA4, which are encoded in the nuclear genome. The complex exists as a monomer or a dimer and forms supercomplexes (SCs) in the inner mitochondrial membrane with NADH-ubiquinone oxidoreductase (complex I, CI) and ubiquinol-cytochrome c oxidoreductase (cytochrome b-c1 complex, complex III, CIII), resulting in different assemblies (supercomplex SCI(1)III(2)IV(1) and megacomplex MCI(2)III(2)IV(2)). Found in a complex with TMEM177, COA6, COX18, COX20, SCO1 and SCO2. Interacts with TMEM177 in a COX20-dependent manner. Interacts with COX20. Interacts with COX16. The cofactor is Cu cation.

It localises to the mitochondrion inner membrane. The enzyme catalyses 4 Fe(II)-[cytochrome c] + O2 + 8 H(+)(in) = 4 Fe(III)-[cytochrome c] + 2 H2O + 4 H(+)(out). Component of the cytochrome c oxidase, the last enzyme in the mitochondrial electron transport chain which drives oxidative phosphorylation. The respiratory chain contains 3 multisubunit complexes succinate dehydrogenase (complex II, CII), ubiquinol-cytochrome c oxidoreductase (cytochrome b-c1 complex, complex III, CIII) and cytochrome c oxidase (complex IV, CIV), that cooperate to transfer electrons derived from NADH and succinate to molecular oxygen, creating an electrochemical gradient over the inner membrane that drives transmembrane transport and the ATP synthase. Cytochrome c oxidase is the component of the respiratory chain that catalyzes the reduction of oxygen to water. Electrons originating from reduced cytochrome c in the intermembrane space (IMS) are transferred via the dinuclear copper A center (CU(A)) of subunit 2 and heme A of subunit 1 to the active site in subunit 1, a binuclear center (BNC) formed by heme A3 and copper B (CU(B)). The BNC reduces molecular oxygen to 2 water molecules using 4 electrons from cytochrome c in the IMS and 4 protons from the mitochondrial matrix. This chain is Cytochrome c oxidase subunit 2 (MT-CO2), found in Vulpes zerda (Fennec fox).